The primary structure comprises 112 residues: UPF0329 protein ECU11_0080 (112 aa).

Belongs to the UPF0329 family.

The sequence is that of UPF0329 protein ECU11_0080 from Encephalitozoon cuniculi (strain GB-M1) (Microsporidian parasite).